Here is a 195-residue protein sequence, read N- to C-terminus: Imidazoleglycerol-phosphate dehydratase (195 aa).

This sequence belongs to the imidazoleglycerol-phosphate dehydratase family.

The protein localises to the cytoplasm. The catalysed reaction is D-erythro-1-(imidazol-4-yl)glycerol 3-phosphate = 3-(imidazol-4-yl)-2-oxopropyl phosphate + H2O. The protein operates within amino-acid biosynthesis; L-histidine biosynthesis; L-histidine from 5-phospho-alpha-D-ribose 1-diphosphate: step 6/9. This is Imidazoleglycerol-phosphate dehydratase from Nitrosomonas eutropha (strain DSM 101675 / C91 / Nm57).